We begin with the raw amino-acid sequence, 263 residues long: MTHPPPFIAVIPARLASTRLPNKPLADLGGKPMVVRVAERAREAGAQQVLVASDAQSVLDAARDHGFEAVLTRADHPSGTDRLAEVAAAFGWRDDTVVVNVQGDEPLIDPVLVRDVASHLAAHPACAIATAAHPIHDAADVFNPNVVKVALDAQSVALYFSRAPIPWSRDAYQPHWPDVAAMPAPAFPVYRHIGLYAYRARFLRTYPSLAQAPIEQAEQLEQLRALWHGERIAVLITESAPEAGIDTPADLARVQALFQPGSK.

This sequence belongs to the KdsB family.

Its subcellular location is the cytoplasm. The catalysed reaction is 3-deoxy-alpha-D-manno-oct-2-ulosonate + CTP = CMP-3-deoxy-beta-D-manno-octulosonate + diphosphate. Its pathway is nucleotide-sugar biosynthesis; CMP-3-deoxy-D-manno-octulosonate biosynthesis; CMP-3-deoxy-D-manno-octulosonate from 3-deoxy-D-manno-octulosonate and CTP: step 1/1. It participates in bacterial outer membrane biogenesis; lipopolysaccharide biosynthesis. Its function is as follows. Activates KDO (a required 8-carbon sugar) for incorporation into bacterial lipopolysaccharide in Gram-negative bacteria. This Burkholderia cenocepacia (strain HI2424) protein is 3-deoxy-manno-octulosonate cytidylyltransferase.